A 219-amino-acid polypeptide reads, in one-letter code: Thiamine-phosphate synthase (219 aa).

4-amino-2-methyl-5-(diphosphooxymethyl)pyrimidine is bound by residues 44–48 (QFREK) and asparagine 79. Mg(2+) contacts are provided by aspartate 80 and aspartate 99. A 4-amino-2-methyl-5-(diphosphooxymethyl)pyrimidine-binding site is contributed by serine 117. 143–145 (TST) is a binding site for 2-[(2R,5Z)-2-carboxy-4-methylthiazol-5(2H)-ylidene]ethyl phosphate. Lysine 146 contributes to the 4-amino-2-methyl-5-(diphosphooxymethyl)pyrimidine binding site. 2-[(2R,5Z)-2-carboxy-4-methylthiazol-5(2H)-ylidene]ethyl phosphate-binding positions include glycine 175 and 195-196 (IS).

It belongs to the thiamine-phosphate synthase family. Mg(2+) serves as cofactor.

It carries out the reaction 2-[(2R,5Z)-2-carboxy-4-methylthiazol-5(2H)-ylidene]ethyl phosphate + 4-amino-2-methyl-5-(diphosphooxymethyl)pyrimidine + 2 H(+) = thiamine phosphate + CO2 + diphosphate. It catalyses the reaction 2-(2-carboxy-4-methylthiazol-5-yl)ethyl phosphate + 4-amino-2-methyl-5-(diphosphooxymethyl)pyrimidine + 2 H(+) = thiamine phosphate + CO2 + diphosphate. The enzyme catalyses 4-methyl-5-(2-phosphooxyethyl)-thiazole + 4-amino-2-methyl-5-(diphosphooxymethyl)pyrimidine + H(+) = thiamine phosphate + diphosphate. It participates in cofactor biosynthesis; thiamine diphosphate biosynthesis; thiamine phosphate from 4-amino-2-methyl-5-diphosphomethylpyrimidine and 4-methyl-5-(2-phosphoethyl)-thiazole: step 1/1. Functionally, condenses 4-methyl-5-(beta-hydroxyethyl)thiazole monophosphate (THZ-P) and 2-methyl-4-amino-5-hydroxymethyl pyrimidine pyrophosphate (HMP-PP) to form thiamine monophosphate (TMP). The sequence is that of Thiamine-phosphate synthase from Bacillus cereus (strain 03BB102).